The sequence spans 239 residues: Phosphoribosylaminoimidazole-succinocarboxamide synthase (239 aa).

The protein belongs to the SAICAR synthetase family.

It carries out the reaction 5-amino-1-(5-phospho-D-ribosyl)imidazole-4-carboxylate + L-aspartate + ATP = (2S)-2-[5-amino-1-(5-phospho-beta-D-ribosyl)imidazole-4-carboxamido]succinate + ADP + phosphate + 2 H(+). It functions in the pathway purine metabolism; IMP biosynthesis via de novo pathway; 5-amino-1-(5-phospho-D-ribosyl)imidazole-4-carboxamide from 5-amino-1-(5-phospho-D-ribosyl)imidazole-4-carboxylate: step 1/2. The chain is Phosphoribosylaminoimidazole-succinocarboxamide synthase from Dichelobacter nodosus (strain VCS1703A).